We begin with the raw amino-acid sequence, 412 residues long: MSLIGRLNLGRRFCTAVPRRSEDIMSNPDCRPSDLCLRVSYLIRCVGDLDTAAKYARLAVFTSIKSESTTTICQSIIGGMLRDKRLKDAYDLYEFFFNQHNLRPNSHCWNYIIESGFQQGLVNDALHFHHRCINSGQVHDYPSDDSFRILTKGLVHSGRLDQAEAFLRGRTVNRTTYPDHVAYNNLIRGFLDLGNFKKANLVLGEFKRLFLIALSETKDDLHHSNYENRVAFLMATFMEYWFKQGKQVEAMECYNRCVLSNRLLVCAETGNALLKVLLKYGEKKNAWALYHELLDKNGTGKGCLDSDTIKIMVDECFDMGWFSEAMETYKKARPKNDYLSDKYIITRFCENRMLSEAESVFVDSLADDFGYIDVNTYKTMIDAYVKAGRIHDAIKTSNKMIDATLKEVSHLF.

The N-terminal 18 residues, 1–18, are a transit peptide targeting the mitochondrion; it reads MSLIGRLNLGRRFCTAVP. PPR repeat units lie at residues 69-104, 105-139, 143-178, 179-213, 230-264, 266-296, 305-339, 344-371, and 373-407; these read TTTICQSIIGGMLRDKRLKDAYDLYEFFFNQHNLRP, NSHCWNYIIESGFQQGLVNDALHFHHRCINSGQVH, SDDSFRILTKGLVHSGRLDQAEAFLRGRTVNRTTYP, DHVAYNNLIRGFLDLGNFKKANLVLGEFKRLFLIA, VAFLMATFMEYWFKQGKQVEAMECYNRCVLSNRLL, CAETGNALLKVLLKYGEKKNAWALYHELLDK, DSDTIKIMVDECFDMGWFSEAMETYKKARPKNDYL, IITRFCENRMLSEAESVFVDSLADDFGY, and DVNTYKTMIDAYVKAGRIHDAIKTSNKMIDATLKE.

Belongs to the PPR family. P subfamily.

Its subcellular location is the mitochondrion. The sequence is that of Pentatricopeptide repeat-containing protein At3g60980, mitochondrial from Arabidopsis thaliana (Mouse-ear cress).